Consider the following 436-residue polypeptide: Adenine nucleotide transporter BT1, chloroplastic/amyloplastic/mitochondrial (436 aa).

Positions 83 to 135 (ASLAPPFPGSRPPGRRGRGSEEEEAEGRRHEEAAAAGRSEPEEGQGQDRQPAP) are disordered. Solcar repeat units follow at residues 132–216 (QPAP…AKKF), 227–311 (IPIP…LKRL), and 324–412 (VGPV…CKKI). A run of 6 helical transmembrane segments spans residues 137–158 (RLVS…LETI), 193–213 (AVNV…YDTA), 229–247 (IPTP…TLCT), 290–310 (SLIG…TLKR), 327–347 (VATL…TFPL), and 384–405 (LYRG…AFMC). Acidic residues predominate over residues 417-428 (EDEEEEDEAGGG). The disordered stretch occupies residues 417–436 (EDEEEEDEAGGGEDDKKKVE).

It belongs to the mitochondrial carrier (TC 2.A.29) family. Highly expressed in silks and endosperm of developing kernels. Expressed at intermediate levels in tassels and lower levels in stems and leaves.

Its subcellular location is the plastid. It localises to the chloroplast inner membrane. It is found in the amyloplast inner membrane. The protein resides in the mitochondrion inner membrane. Inhibited by mersalyl. In terms of biological role, probable adenylate translocator that mediates transport of ADP-glucose into endosperm storage plastids during starch synthesis. Transports cytosolic ADP-glucose to amyloplast stroma by counter-exchange with ADP. This Zea mays (Maize) protein is Adenine nucleotide transporter BT1, chloroplastic/amyloplastic/mitochondrial (BT1).